Reading from the N-terminus, the 368-residue chain is Protein Wnt-1 (368 aa).

A signal peptide spans 1–25; sequence MRGPALLLALRALCALSALRGTARA. 11 disulfides stabilise this stretch: C91/C102, C141/C149, C151/C168, C216/C230, C218/C225, C297/C328, C313/C323, C327/C367, C343/C358, C345/C355, and C350/C351. Residue S222 is the site of O-palmitoleoyl serine; by PORCN attachment.

The protein belongs to the Wnt family. In terms of assembly, forms a soluble 1:1 complex with AFM; this prevents oligomerization and is required for prolonged biological activity. The complex with AFM may represent the physiological form in body fluids. Interacts with PORCN. N-glycosylated. N-glycosylation favors subsequent palmitoleoylation. In terms of processing, palmitoleoylation is required for efficient binding to frizzled receptors. Palmitoleoylation is necessary for proper trafficking to cell surface. Depalmitoleoylated by NOTUM, leading to inhibit Wnt signaling pathway.

It is found in the secreted. Its subcellular location is the extracellular space. The protein resides in the extracellular matrix. In terms of biological role, ligand for members of the frizzled family of seven transmembrane receptors. Acts in the canonical Wnt signaling pathway by promoting beta-catenin-dependent transcriptional activation. Developmental protein that promotes cell proliferation in the developing spinal cord. Has a role in osteoblast function, bone development and bone homeostasis. The polypeptide is Protein Wnt-1 (WNT1) (Gallus gallus (Chicken)).